Consider the following 183-residue polypeptide: Transposon gamma-delta resolvase (183 aa).

In terms of domain architecture, Resolvase/invertase-type recombinase catalytic spans 2–137; sequence RLFGYARVST…EGRQEAMAKG (136 aa). The active-site O-(5'-phospho-DNA)-serine intermediate is the Ser10. Residues 161–180 constitute a DNA-binding region (H-T-H motif); sequence ASHISKTMNIARSTVYKVIN.

This sequence belongs to the site-specific recombinase resolvase family.

Its function is as follows. This protein catalyzes the site-specific recombination of the transposon and also regulates its frequency of transposition. This Escherichia coli (strain K12) protein is Transposon gamma-delta resolvase (tnpR).